The primary structure comprises 29 residues: Trypsin inhibitor 1 (29 aa).

3 disulfides stabilise this stretch: C3-C20, C10-C22, and C16-C28.

Belongs to the protease inhibitor I7 (squash-type serine protease inhibitor) family.

The protein resides in the secreted. Functionally, inhibits trypsin. This Cucurbita maxima (Pumpkin) protein is Trypsin inhibitor 1.